A 222-amino-acid chain; its full sequence is uncharacterized protein (222 aa).

The segment at 142 to 222 (ARRGGCVHPP…LPDPPSAGHL (81 aa)) is disordered. Over residues 160–169 (QSRSISSRRA) the composition is skewed to low complexity. The segment covering 182 to 196 (PRRRPHRHRTRPQTR) has biased composition (basic residues).

Belongs to the Rv1128c/1148c/1588c/1702c/1945/3466 family.

This is an uncharacterized protein from Mycobacterium tuberculosis (strain ATCC 25618 / H37Rv).